Consider the following 211-residue polypeptide: Probable GTP-binding protein EngB (211 aa).

Residues 26 to 200 (SGIEIAFAGR…RQKLDDWFAA (175 aa)) form the EngB-type G domain. Residues 34-41 (GRSNAGKS), 61-65 (GRTRL), 79-82 (DLPG), 146-149 (TKAD), and 179-181 (FSS) each bind GTP. 2 residues coordinate Mg(2+): S41 and T63.

This sequence belongs to the TRAFAC class TrmE-Era-EngA-EngB-Septin-like GTPase superfamily. EngB GTPase family. Requires Mg(2+) as cofactor.

Functionally, necessary for normal cell division and for the maintenance of normal septation. This is Probable GTP-binding protein EngB from Sodalis glossinidius (strain morsitans).